The following is a 278-amino-acid chain: Large ribosomal subunit protein uL2 (278 aa).

Residues 222 to 264 form a disordered region; that stretch reads GVAMNPIDHPHGGGEGRTSGGRHPVTPWGKPTKGRKTRKNKAT.

Belongs to the universal ribosomal protein uL2 family. As to quaternary structure, part of the 50S ribosomal subunit. Forms a bridge to the 30S subunit in the 70S ribosome.

Functionally, one of the primary rRNA binding proteins. Required for association of the 30S and 50S subunits to form the 70S ribosome, for tRNA binding and peptide bond formation. It has been suggested to have peptidyltransferase activity; this is somewhat controversial. Makes several contacts with the 16S rRNA in the 70S ribosome. In Phenylobacterium zucineum (strain HLK1), this protein is Large ribosomal subunit protein uL2.